A 183-amino-acid polypeptide reads, in one-letter code: Probable cobalt-precorrin-6B C(15)-methyltransferase (decarboxylating) (183 aa).

S-adenosyl-L-methionine contacts are provided by residues T19, 43–47, D64, and A92; that span reads GCGSG.

The protein belongs to the methyltransferase superfamily. Archaeal-type CbiT family.

It catalyses the reaction Co-precorrin-6B + S-adenosyl-L-methionine = Co-precorrin-7 + S-adenosyl-L-homocysteine + CO2. Its pathway is cofactor biosynthesis; adenosylcobalamin biosynthesis; cob(II)yrinate a,c-diamide from sirohydrochlorin (anaerobic route): step 8/10. Catalyzes the methylation of C-15 in cobalt-precorrin-6B followed by the decarboxylation of C-12 to form cobalt-precorrin-7. The polypeptide is Probable cobalt-precorrin-6B C(15)-methyltransferase (decarboxylating) (Methanocaldococcus jannaschii (strain ATCC 43067 / DSM 2661 / JAL-1 / JCM 10045 / NBRC 100440) (Methanococcus jannaschii)).